The chain runs to 294 residues: Phosphate import ATP-binding protein PstB (294 aa).

Residues 1 to 18 show a composition bias toward polar residues; sequence MSETMTNQNVVNEEQPFN. Positions 1–24 are disordered; sequence MSETMTNQNVVNEEQPFNESKHRS. The 242-residue stretch at 48 to 289 folds into the ABC transporter domain; sequence LEVNKLKLFY…PSCKQTEDYI (242 aa). 80–87 is an ATP binding site; that stretch reads GPSGCGKS.

This sequence belongs to the ABC transporter superfamily. Phosphate importer (TC 3.A.1.7) family. The complex is composed of two ATP-binding proteins (PstB), two transmembrane proteins (PstC and PstA) and a solute-binding protein (PstS).

It localises to the cell inner membrane. It carries out the reaction phosphate(out) + ATP + H2O = ADP + 2 phosphate(in) + H(+). Part of the ABC transporter complex PstSACB involved in phosphate import. Responsible for energy coupling to the transport system. The protein is Phosphate import ATP-binding protein PstB of Hahella chejuensis (strain KCTC 2396).